Consider the following 210-residue polypeptide: MMKANFIVVEGLEGAGKSTAIKTVLDTLKQAGIENIVNTREPGGTPLAEKMRALVKEEHEGEELKDMTELLLLYAARVQLVENVIKPALANGQWVVGDRHDLSSQAYQGGGRQIDASLMKNLRDTTLGDFKPAFTLYMDIDPRIGLERARGRGELDRIEKMDISFFERTRERYLEIANADPSIVVINAEQSIEEVSRDIQDALNEWLSRQ.

Residue glycine 11 to serine 18 participates in ATP binding.

This sequence belongs to the thymidylate kinase family.

The catalysed reaction is dTMP + ATP = dTDP + ADP. Functionally, phosphorylation of dTMP to form dTDP in both de novo and salvage pathways of dTTP synthesis. This is Thymidylate kinase from Vibrio parahaemolyticus serotype O3:K6 (strain RIMD 2210633).